The primary structure comprises 130 residues: Small ribosomal subunit protein uS9 (130 aa).

Belongs to the universal ribosomal protein uS9 family.

The sequence is that of Small ribosomal subunit protein uS9 from Histophilus somni (strain 129Pt) (Haemophilus somnus).